The sequence spans 75 residues: Porwaprin-d (75 aa).

Residues 1-24 (MSSGGLLLLLGLLTLWAELTPVSS) form the signal peptide. A WAP domain is found at 27-72 (RPKKPGLCPPRPQKPPCVRECKNDWRCPGEQKCCRYGCIYECRDPI). Disulfide bonds link Cys34–Cys60, Cys43–Cys64, Cys47–Cys59, and Cys53–Cys68.

It belongs to the venom waprin family. In terms of tissue distribution, expressed by the venom gland.

The protein resides in the secreted. Functionally, damages membranes of susceptible bacteria. Has no hemolytic activity. Not toxic to mice. Does not inhibit the proteinases elastase and cathepsin G. This chain is Porwaprin-d, found in Pseudechis porphyriacus (Red-bellied black snake).